We begin with the raw amino-acid sequence, 256 residues long: DNA repair protein RecO (256 aa).

Belongs to the RecO family.

Involved in DNA repair and RecF pathway recombination. This is DNA repair protein RecO from Desulforamulus reducens (strain ATCC BAA-1160 / DSM 100696 / MI-1) (Desulfotomaculum reducens).